The following is a 230-amino-acid chain: RNA-binding riboflavin kinase RibR (230 aa).

Belongs to the RibR family.

It catalyses the reaction riboflavin + ATP = FMN + ADP + H(+). Functionally, may be directly involved in the regulation of the rib genes. C-terminal part of RibR specifically binds to RFN of the rib leader of the riboflavin biosynthetic operon. The RFN element is a sequence within the rib-leader mRNA reported to serve as a receptor for an FMN-dependent riboswitch. Possibly, RibR produces the comodulator FMN through its own N-terminal flavokinase activity. FMN-activated RibR may stabilize the anti-anti terminator structure of RFN mRNA, causing transcription termination of the rib genes in trans. The chain is RNA-binding riboflavin kinase RibR (ribR) from Bacillus subtilis (strain 168).